The chain runs to 281 residues: L-ornithine N(alpha)-acyltransferase (281 aa).

It belongs to the acetyltransferase family. OlsB subfamily.

It catalyses the reaction a (3R)-hydroxyacyl-[ACP] + L-ornithine = a lyso-ornithine lipid + holo-[ACP] + H(+). It functions in the pathway lipid metabolism. Its function is as follows. Catalyzes the first step in the biosynthesis of ornithine lipids, which are phosphorus-free membrane lipids. Catalyzes the 3-hydroxyacyl-acyl carrier protein-dependent acylation of ornithine to form lyso-ornithine lipid (LOL). This is L-ornithine N(alpha)-acyltransferase from Brucella abortus (strain 2308).